The following is a 245-amino-acid chain: 1-(5-phosphoribosyl)-5-[(5-phosphoribosylamino)methylideneamino] imidazole-4-carboxamide isomerase (245 aa).

The active-site Proton acceptor is the Asp8. The Proton donor role is filled by Asp130.

Belongs to the HisA/HisF family.

The protein resides in the cytoplasm. It carries out the reaction 1-(5-phospho-beta-D-ribosyl)-5-[(5-phospho-beta-D-ribosylamino)methylideneamino]imidazole-4-carboxamide = 5-[(5-phospho-1-deoxy-D-ribulos-1-ylimino)methylamino]-1-(5-phospho-beta-D-ribosyl)imidazole-4-carboxamide. Its pathway is amino-acid biosynthesis; L-histidine biosynthesis; L-histidine from 5-phospho-alpha-D-ribose 1-diphosphate: step 4/9. In Azotobacter vinelandii (strain DJ / ATCC BAA-1303), this protein is 1-(5-phosphoribosyl)-5-[(5-phosphoribosylamino)methylideneamino] imidazole-4-carboxamide isomerase.